The chain runs to 384 residues: Ribosomal RNA large subunit methyltransferase G (384 aa).

This sequence belongs to the methyltransferase superfamily. RlmG family.

It localises to the cytoplasm. The catalysed reaction is guanosine(1835) in 23S rRNA + S-adenosyl-L-methionine = N(2)-methylguanosine(1835) in 23S rRNA + S-adenosyl-L-homocysteine + H(+). In terms of biological role, specifically methylates the guanine in position 1835 (m2G1835) of 23S rRNA. This Pseudoalteromonas atlantica (strain T6c / ATCC BAA-1087) protein is Ribosomal RNA large subunit methyltransferase G.